The sequence spans 370 residues: UDP-N-acetylglucosamine--N-acetylmuramyl-(pentapeptide) pyrophosphoryl-undecaprenol N-acetylglucosamine transferase (370 aa).

Residues 10-12 (TGG), Asn-124, Ser-196, Ile-253, and Gln-298 contribute to the UDP-N-acetyl-alpha-D-glucosamine site.

This sequence belongs to the glycosyltransferase 28 family. MurG subfamily.

It localises to the cell membrane. The enzyme catalyses Mur2Ac(oyl-L-Ala-gamma-D-Glu-L-Lys-D-Ala-D-Ala)-di-trans,octa-cis-undecaprenyl diphosphate + UDP-N-acetyl-alpha-D-glucosamine = beta-D-GlcNAc-(1-&gt;4)-Mur2Ac(oyl-L-Ala-gamma-D-Glu-L-Lys-D-Ala-D-Ala)-di-trans,octa-cis-undecaprenyl diphosphate + UDP + H(+). Its pathway is cell wall biogenesis; peptidoglycan biosynthesis. Cell wall formation. Catalyzes the transfer of a GlcNAc subunit on undecaprenyl-pyrophosphoryl-MurNAc-pentapeptide (lipid intermediate I) to form undecaprenyl-pyrophosphoryl-MurNAc-(pentapeptide)GlcNAc (lipid intermediate II). This is UDP-N-acetylglucosamine--N-acetylmuramyl-(pentapeptide) pyrophosphoryl-undecaprenol N-acetylglucosamine transferase from Limosilactobacillus reuteri subsp. reuteri (strain JCM 1112) (Lactobacillus reuteri).